We begin with the raw amino-acid sequence, 147 residues long: UPF0735 ACT domain-containing protein ABC1543 (147 aa).

The 76-residue stretch at 70 to 145 folds into the ACT domain; that stretch reads TFSINLADRS…SVERVELVGS (76 aa).

This sequence belongs to the UPF0735 family.

The protein is UPF0735 ACT domain-containing protein ABC1543 of Shouchella clausii (strain KSM-K16) (Alkalihalobacillus clausii).